Reading from the N-terminus, the 316-residue chain is Annexin D7 (316 aa).

A2 is modified (N-acetylalanine). Annexin repeat units follow at residues 11-82 (PLPE…LWTF), 83-154 (EPAE…PLVS), 166-237 (TLAR…AVIK), and 241-312 (YPEK…ALLG). F24, G26, G28, and E68 together coordinate Ca(2+). S95 is subject to Phosphoserine. T100 and T112 each carry phosphothreonine. Y129 bears the Phosphotyrosine mark. Positions 254 and 258 each coordinate Ca(2+). Y283 carries the post-translational modification Phosphotyrosine. S288 is subject to Phosphoserine. Ca(2+)-binding residues include D298, T299, and E304.

Belongs to the annexin (TC 1.A.31.1) family. In terms of tissue distribution, expressed in flowers.

The sequence is that of Annexin D7 (ANNAT7) from Arabidopsis thaliana (Mouse-ear cress).